Consider the following 524-residue polypeptide: Light-independent protochlorophyllide reductase subunit B (524 aa).

D36 lines the [4Fe-4S] cluster pocket. D290 (proton donor) is an active-site residue. 425–426 (GL) provides a ligand contact to substrate.

This sequence belongs to the ChlB/BchB/BchZ family. Protochlorophyllide reductase is composed of three subunits; ChlL, ChlN and ChlB. Forms a heterotetramer of two ChlB and two ChlN subunits. [4Fe-4S] cluster is required as a cofactor.

The enzyme catalyses chlorophyllide a + oxidized 2[4Fe-4S]-[ferredoxin] + 2 ADP + 2 phosphate = protochlorophyllide a + reduced 2[4Fe-4S]-[ferredoxin] + 2 ATP + 2 H2O. It functions in the pathway porphyrin-containing compound metabolism; chlorophyll biosynthesis (light-independent). Component of the dark-operative protochlorophyllide reductase (DPOR) that uses Mg-ATP and reduced ferredoxin to reduce ring D of protochlorophyllide (Pchlide) to form chlorophyllide a (Chlide). This reaction is light-independent. The NB-protein (ChlN-ChlB) is the catalytic component of the complex. In Parasynechococcus marenigrum (strain WH8102), this protein is Light-independent protochlorophyllide reductase subunit B.